We begin with the raw amino-acid sequence, 354 residues long: Selenide, water dikinase (354 aa).

The active site involves C23. ATP-binding positions include K26 and 54 to 56 (TSD). D57 is a binding site for Mg(2+). ATP contacts are provided by residues D74, D97, and 145-147 (GHS). A Mg(2+)-binding site is contributed by D97. Residue D233 coordinates Mg(2+).

This sequence belongs to the selenophosphate synthase 1 family. Class I subfamily. In terms of assembly, homodimer. It depends on Mg(2+) as a cofactor.

It catalyses the reaction hydrogenselenide + ATP + H2O = selenophosphate + AMP + phosphate + 2 H(+). Its function is as follows. Synthesizes selenophosphate from selenide and ATP. In Burkholderia pseudomallei (strain K96243), this protein is Selenide, water dikinase.